The primary structure comprises 284 residues: ELMO domain-containing protein B (284 aa).

In terms of domain architecture, ELMO spans 124-276 (EHEASLERLW…EFETKISQNS (153 aa)).

This Dictyostelium discoideum (Social amoeba) protein is ELMO domain-containing protein B (elmoB).